Reading from the N-terminus, the 275-residue chain is 3-methyl-2-oxobutanoate hydroxymethyltransferase (275 aa).

Mg(2+)-binding residues include aspartate 49 and aspartate 88. Residues 49 to 50 (DS), aspartate 88, and lysine 118 contribute to the 3-methyl-2-oxobutanoate site. Glutamate 120 serves as a coordination point for Mg(2+). The active-site Proton acceptor is the glutamate 187.

It belongs to the PanB family. As to quaternary structure, homodecamer; pentamer of dimers. Mg(2+) is required as a cofactor.

It is found in the cytoplasm. The enzyme catalyses 3-methyl-2-oxobutanoate + (6R)-5,10-methylene-5,6,7,8-tetrahydrofolate + H2O = 2-dehydropantoate + (6S)-5,6,7,8-tetrahydrofolate. Its pathway is cofactor biosynthesis; (R)-pantothenate biosynthesis; (R)-pantoate from 3-methyl-2-oxobutanoate: step 1/2. Functionally, catalyzes the reversible reaction in which hydroxymethyl group from 5,10-methylenetetrahydrofolate is transferred onto alpha-ketoisovalerate to form ketopantoate. The polypeptide is 3-methyl-2-oxobutanoate hydroxymethyltransferase (Bartonella quintana (strain Toulouse) (Rochalimaea quintana)).